Here is a 2344-residue protein sequence, read N- to C-terminus: Genome polyprotein (2344 aa).

One can recognise an SF3 helicase domain in the interval 492-653 (QKVISDLHTM…ESWQATRHGS (162 aa)). ATP is bound at residue 522 to 529 (GAPGIGKT). An O-(5'-phospho-RNA)-tyrosine modification is found at Tyr-1014. Tyr-1014 is subject to O-UMP-tyrosine; transient. Positions 1109–1244 (GLPGFMRHNG…SKMCTLIDLT (136 aa)) constitute a Peptidase C24 domain. Active-site for 3CLpro activity residues include His-1135, Asp-1152, and Cys-1212. The RdRp catalytic domain maps to 1495–1619 (SDFLCLDYSK…AMTPMMVSLL (125 aa)). The cysteines at positions 1584 and 1591 are disulfide-linked. Positions 1774–1796 (PQGEAARTATTASVPGTTTDGMD) are disordered. The segment covering 1781–1792 (TATTASVPGTTT) has biased composition (low complexity).

As to quaternary structure, homodimer. In terms of assembly, homomultimer. Interacts with host type II histo-blood group structures antigens at the surface of target cells. It depends on Mn(2+) as a cofactor. Post-translationally, specific enzymatic cleavages by its own cysteine protease yield mature proteins. The protease cleaves itself from the nascent polyprotein autocatalytically. Precursor p41 can be cleaved by viral 3CLpro into protein p19 and VPg, or cleaved by host protease into protein p23/2 and protein p18. VPg is uridylylated by the polymerase and is covalently attached to the 5'-end of the polyadenylated genomic and subgenomic RNAs. This uridylylated form acts as a nucleotide-peptide primer for the polymerase.

The protein localises to the host cytoplasm. The protein resides in the host endoplasmic reticulum. It localises to the virion. The catalysed reaction is a ribonucleoside 5'-triphosphate + H2O = a ribonucleoside 5'-diphosphate + phosphate + H(+). It carries out the reaction Endopeptidase with a preference for cleavage when the P1 position is occupied by Glu-|-Xaa and the P1' position is occupied by Gly-|-Yaa.. The enzyme catalyses RNA(n) + a ribonucleoside 5'-triphosphate = RNA(n+1) + diphosphate. Together with NTPase and NS4, initiates the formation of the replication complex. Induces the proliferation of the host smooth ER membranes forming long tubular structures. These remodeled membranes probably form the viral factories that contain the replication complex. Functionally, displays NTPase activity, but no helicase activity. Induces the formation of convoluted membranes derived from the host ER. These remodeled membranes probably form the viral factories that contain the replication complex. Together with NS2 and NS4, initiates the formation of the replication complex. Its function is as follows. Probable key protein responsible for the formation of membrane alterations by the virus. Induces the formation of convoluted membranes derived from the host ER. These remodeled membranes probably form the viral factories that contain the replication complex. Together with NS2 and NTPase, initiates the formation of the replication complex. In terms of biological role, viral genome-linked protein is covalently linked to the 5'-end of the positive-strand, negative-strand genomic RNAs and subgenomic RNA. Acts as a genome-linked replication primer. May recruit ribosome to viral RNA thereby promoting viral proteins translation. Interacts with host translation initiation complex to allow the translation of viral proteins. Processes the polyprotein. 3CLpro-RdRp is first released by autocleavage, then all other proteins are cleaved. May cleave polyadenylate-binding protein thereby inhibiting cellular translation. Functionally, replicates genomic and antigenomic RNA by recognizing replications specific signals. Also transcribes a subgenomic mRNA by initiating RNA synthesis internally on antigenomic RNA. This sgRNA codes for structural proteins. Catalyzes the covalent attachment VPg with viral RNAs. Its function is as follows. Capsid protein VP60 self assembles to form an icosahedral capsid with a T=3 symmetry, about 35 nm in diameter, and consisting of 180 capsid proteins. A smaller form of capsid with a diameter of 23 nm might be capsid proteins assembled as icosahedron with T=1 symmetry. The capsid encapsulate VP2 proteins and genomic or subgenomic RNA. Attaches virion to target cells by binding histo-blood group antigens, inducing endocytosis of the viral particle. Acidification of the endosome induces conformational change of capsid protein thereby injecting virus genomic RNA into host cytoplasm. This chain is Genome polyprotein, found in Oryctolagus cuniculus (Rabbit).